The chain runs to 532 residues: uncharacterized protein (532 aa).

3 disordered regions span residues 26 to 84 (KALR…TDSE), 97 to 129 (VFDESVSSDTDSEESHEEKRILPLGTPGQQVGR), and 157 to 470 (SKAA…HTCQ). The span at 30 to 40 (GNNNGSSTSGG) shows a compositional bias: low complexity. Over residues 67 to 80 (DIISQARRQVSLSR) the composition is skewed to polar residues. The segment covering 157 to 181 (SKAAGEESKRHAHFESIQEEEKISE) has biased composition (basic and acidic residues). Residues 198 to 213 (IQSGSESSDSDSIIFD) show a composition bias toward low complexity. A compositionally biased stretch (basic and acidic residues) spans 237–249 (VEKKIEKPAVKEQ). Low complexity-rich tracts occupy residues 259–290 (PTPTESSFESSSDSSSTSESSTSSESSSSASE), 298–315 (ESQVSSSKTSTSKASSSK), and 326–335 (SSSSSASTIS). The segment covering 347-356 (KTKKPDKKRA) has biased composition (basic residues). Composition is skewed to basic and acidic residues over residues 357–368 (KPDDIRQNKKPE), 389–403 (STVRETNRTLEESLK), 410–419 (KSSEKMEKPR), and 437–448 (RDAEREQDIERR). The segment covering 449–461 (REKRARRFRSRRR) has biased composition (basic residues).

This is an uncharacterized protein from Caenorhabditis elegans.